An 857-amino-acid chain; its full sequence is Leucine--tRNA ligase (857 aa).

Positions 42-52 (PYPSGRLHMGH) match the 'HIGH' region motif. The 'KMSKS' region signature appears at 617 to 621 (KMSKS). An ATP-binding site is contributed by K620.

It belongs to the class-I aminoacyl-tRNA synthetase family.

It is found in the cytoplasm. It catalyses the reaction tRNA(Leu) + L-leucine + ATP = L-leucyl-tRNA(Leu) + AMP + diphosphate. In Vibrio parahaemolyticus serotype O3:K6 (strain RIMD 2210633), this protein is Leucine--tRNA ligase.